We begin with the raw amino-acid sequence, 77 residues long: Large ribosomal subunit protein eL20 (77 aa).

This sequence belongs to the eukaryotic ribosomal protein eL20 family. Part of the 50S ribosomal subunit. Binds 23S rRNA.

The polypeptide is Large ribosomal subunit protein eL20 (Pyrococcus abyssi (strain GE5 / Orsay)).